The primary structure comprises 401 residues: Argininosuccinate synthase (401 aa).

Position 9-17 (9-17) interacts with ATP; sequence AYSGGLDTS. Position 86 (Tyr86) interacts with L-citrulline. An ATP-binding site is contributed by Gly116. Residues Thr118, Asn122, and Asp123 each contribute to the L-aspartate site. Asn122 contributes to the L-citrulline binding site. Residues Arg126, Ser174, Ser183, Glu259, and Tyr271 each contribute to the L-citrulline site.

Belongs to the argininosuccinate synthase family. Type 1 subfamily. Homotetramer.

It localises to the cytoplasm. It catalyses the reaction L-citrulline + L-aspartate + ATP = 2-(N(omega)-L-arginino)succinate + AMP + diphosphate + H(+). Its pathway is amino-acid biosynthesis; L-arginine biosynthesis; L-arginine from L-ornithine and carbamoyl phosphate: step 2/3. The polypeptide is Argininosuccinate synthase (Bacillus cereus (strain AH187)).